The primary structure comprises 730 residues: Cyclin-T2 (730 aa).

An interaction with MDFIC and MDFI region spans residues 1–300; the sequence is MASGRGASSR…SVTGVPTNPS (300 aa). One can recognise a Cyclin N-terminal domain in the interval 12–147; the sequence is FFTREQLENT…IMLQTLGFEI (136 aa). Positions 250 to 300 are interaction with POLR2A; that stretch reads RLKKIRNWRANQAARKPKVDGQVSETPLLGSSLVQNSILVDSVTGVPTNPS. 2 stretches are compositionally biased toward polar residues: residues 341–350 and 360–389; these read TSYGLSSHQE and TEQL…SISL. Positions 341–430 are disordered; sequence TSYGLSSHQE…GPISTTPGII (90 aa). The span at 398 to 412 shows a compositional bias: basic and acidic residues; the sequence is DKISDHSSVKQEYTH. A Glycyl lysine isopeptide (Lys-Gly) (interchain with G-Cter in SUMO2) cross-link involves residue K407. S480 carries the post-translational modification Phosphoserine. The interval 497-652 is disordered; it reads DKKEKSGSLK…SSSSSSSSVK (156 aa). Basic and acidic residues-rich tracts occupy residues 517–543 and 552–565; these read SASK…EGSG and ISRD…EHPS. Positions 566–578 are enriched in basic residues; that stretch reads SRHHTSSHKHSHS. Low complexity predominate over residues 579-588; the sequence is HSGSSSGGSK. S601 carries the phosphoserine modification. 2 stretches are compositionally biased toward low complexity: residues 606 to 616 and 637 to 652; these read SSDGISSSSSS and SSKS…SSVK.

The protein belongs to the cyclin family. Cyclin C subfamily. Interacts with CDK9 to form P-TEFb. Interacts with POLR2A (via the C-terminal domain (CTD)); mediates transcriptional activity. Interacts with HEXIM1; mediates formation of a tripartite complex with KPNA2. Interacts with HEXIM2. Interacts with PKN1; enhances MYOD1-dependent transcription. P-TEFB complex interacts with RB1; promotes phosphorylation of RB1. P-TEFB complex interacts with MYOD1; promotes the transcriptional activity of MYOD1 through its CDK9-mediated phosphorylation. Interacts with MDFI and MDFIC. Interacts with MON1B; down-regulates CCNT2-mediated activation of viral promoters during herpes simplex virus 1/HHV-1 infection. As to quaternary structure, (Microbial infection) Interacts with HIV-2 and SIV Tat. Does not bind efficiently to the transactivation domain of the HIV-1 Tat. Ubiquitously expressed.

It is found in the cytoplasm. The protein localises to the perinuclear region. Its subcellular location is the nucleus. Regulatory subunit of the cyclin-dependent kinase pair (CDK9/cyclin T) complex, also called positive transcription elongation factor B (P-TEFB), which is proposed to facilitate the transition from abortive to production elongation by phosphorylating the CTD (carboxy-terminal domain) of the large subunit of RNA polymerase II (RNAP II). The activity of this complex is regulated by binding with 7SK snRNA. Plays a role during muscle differentiation; P-TEFB complex interacts with MYOD1; this tripartite complex promotes the transcriptional activity of MYOD1 through its CDK9-mediated phosphorylation and binds the chromatin of promoters and enhancers of muscle-specific genes; this event correlates with hyperphosphorylation of the CTD domain of RNA pol II. In addition, enhances MYOD1-dependent transcription through interaction with PKN1. Involved in early embryo development. Its function is as follows. (Microbial infection) Promotes transcriptional activation of early and late herpes simplex virus 1/HHV-1 promoters. The polypeptide is Cyclin-T2 (Homo sapiens (Human)).